Here is a 457-residue protein sequence, read N- to C-terminus: V-type ATP synthase beta chain (457 aa).

Belongs to the ATPase alpha/beta chains family.

Functionally, produces ATP from ADP in the presence of a proton gradient across the membrane. The V-type beta chain is a regulatory subunit. The protein is V-type ATP synthase beta chain of Clostridioides difficile (strain 630) (Peptoclostridium difficile).